Reading from the N-terminus, the 533-residue chain is Dipeptide-binding protein (533 aa).

A signal peptide spans Met1–Ala24.

Belongs to the bacterial solute-binding protein 5 family.

The protein localises to the periplasm. Binds different dipeptides. Probably bind only L-amino acid containing dipeptides. This is Dipeptide-binding protein from Pseudomonas aeruginosa (strain ATCC 15692 / DSM 22644 / CIP 104116 / JCM 14847 / LMG 12228 / 1C / PRS 101 / PAO1).